Reading from the N-terminus, the 365-residue chain is Mannose-1-phosphate guanylyltransferase catalytic subunit beta (365 aa).

The substrate-binding domain stretch occupies residues 2–221 (KALILVGGYG…PGFWMDVGQP (220 aa)). D109 serves as a coordination point for GDP-alpha-D-mannose. D109 is a Mg(2+) binding site. The active site involves K161. D217 provides a ligand contact to GDP-alpha-D-mannose. D217 lines the Mg(2+) pocket. The interval 244–365 (ETGSNIHPTA…VNVPSKDIIM (122 aa)) is hexapeptide repeat domain.

The protein belongs to the transferase hexapeptide repeat family. As to quaternary structure, component of the GMPPA-GMPPB mannose-1-phosphate guanylyltransferase complex composed of 4 GMPPA subunits and 8 tag-335/GMPPB subunits; the complex is organized into three layers, a central layer made up of 2 GMPPA dimers sandwiched between two layers each made up of 2 tag-335/GMPPB dimers. Catalytic activity of tag-335/GMPPB is reduced when part of the complex and binding of GDP-alpha-D-Mannose by GMPPA induces allosteric feedback inhibition of tag-335/GMPPB. Mg(2+) serves as cofactor.

The catalysed reaction is alpha-D-mannose 1-phosphate + GTP + H(+) = GDP-alpha-D-mannose + diphosphate. Its pathway is nucleotide-sugar biosynthesis; GDP-alpha-D-mannose biosynthesis; GDP-alpha-D-mannose from alpha-D-mannose 1-phosphate (GTP route): step 1/1. With respect to regulation, enzyme activity is reduced by incorporation into the GMPPA-GMPPB mannose-1-phosphate guanylyltransferase complex. Allosterically inhibited, when part of the GMPPA-GMPPB complex, by GDP-alpha-D-mannose binding to GMPPA. Catalytic subunit of the GMPPA-GMPPB mannose-1-phosphate guanylyltransferase complex. Catalyzes the formation of GDP-mannose, an essential precursor of glycan moieties of glycoproteins and glycolipids. Can catalyze the reverse reaction in vitro. Together with GMPPA regulates GDP-alpha-D-mannose levels. The polypeptide is Mannose-1-phosphate guanylyltransferase catalytic subunit beta (tag-335) (Caenorhabditis elegans).